We begin with the raw amino-acid sequence, 938 residues long: MDQKGASGSRPNRLSQGKEAYACERSATVSVAANRNNIINEMAKICEADRQTSAIARRTQVHERLAVANSDFVAVEDLILAYAEPTPEDQVEMIMRDFCSSPTYEEDEDEPSFESEPWFRFRNKRIRTYSRKRDPRSYMAVRTEKPRGTSGLSVQRDLNTSFTSMACDFDAASSQKIHEVLLNLSQYFSATAKTSSPTPVPSQIDLPTEARQDSGKECFNAEVENLRDDLLQNGFTFEASIYDNEHEQEGSEKFNVCSDAEIAEHKKLLKGPTQAEHVGKEENPNFILEGIPLSEWLTPMEPPMISKDVIKNIPDKKVKLEPSFQKEQKSSKDSNESKIRAPSKPSCDITEKNEGTTVLDQPYAAQQENLSNDGDLLEEFLFNEWHPMQCSNGPSTSNDAIQVPKEEINSIKRTDEEQPEKETPNKSRSTSSHQLSFRKTSLKFIEISEEMKIKGEKFVDKVISGLYHPSHKCNLRTEEYSDNHSQVMESTQCVEFKSALNKPIELLDKKETYDMLAKVEVGEINGKCSPLNNEAIAEPEFCGFRTASNKAIPISEKMKIKTAEFMAEFQYKETNHQNDYLVNQPNDNSTSVGLDTVLKKSIEISEEMPTKASKLVVVDTRLGEPHQPTLDPVCSDLNEPQFFGFRTASKKAIEITEAMEKRGAMFLAQSRATDQQAEWQPSDFPDIPHTSPKNEIHSINVENNKAVHTKTASETEFFGFRTASNKGIVISENTKMKVAQFMSEFQAADASTDSNKPIVISEEPSNIAAKFVDEAAAEDSPSKSTFCNVQSQENPLNIEHFKHDLFVKRSAKEEHPLCSQPLVRTPRRSLEIHSSLSQLAGQSPLDQATKKSVIARRNLLSLKRKRKIVSSTETSTSCASPDMERFAPKPSSTSTPLADRDLNRSKDCAKNRQDAEDMSPICMQPKKSRRLGLSRSRY.

Composition is skewed to basic and acidic residues over residues 320–339 (LEPS…ESKI) and 409–425 (NSIK…ETPN). Disordered stretches follow at residues 320–359 (LEPS…TTVL) and 409–434 (NSIK…SSHQ). BRCA2 repeat units follow at residues 537-571 (AEPE…EFQY), 638-672 (NEPQ…QSRA), and 713-747 (SETE…EFQA). Positions 870–879 (SSTETSTSCA) are enriched in polar residues. The interval 870–938 (SSTETSTSCA…RRLGLSRSRY (69 aa)) is disordered. Residues 898-915 (ADRDLNRSKDCAKNRQDA) are compositionally biased toward basic and acidic residues. Residues 926–938 (KKSRRLGLSRSRY) show a composition bias toward basic residues.

As to quaternary structure, interacts with Rad9 and spn-A/Rad51.

Its subcellular location is the nucleus. Involved in and required for double-strand break repair by meiotic and mitotic homologous recombination. During meiosis, has a dual role in the repair of meiotic double-stranded breaks and the efficient activation of the meiotic recombination checkpoint. The chain is Breast cancer type 2 susceptibility protein homolog from Drosophila sechellia (Fruit fly).